Reading from the N-terminus, the 151-residue chain is MASSTHPEMPELSGSYENKYLCLTICGYRKAGMTEEDYHNHMVHISAPMTKHLMVKYGIRRWTQIHNQAATRALMAELFDPQMANVADFDCFSQVVFQNVEDYKRMKQDPWYQEHLVGDHENFADTKRTLVTIGWIEEFVRDGEAVDGFKS.

Residues 31-126 (AGMTEEDYHN…VGDHENFADT (96 aa)) enclose the EthD domain.

This sequence belongs to the tpcK family.

The catalysed reaction is atrochrysone carboxylate + H(+) = atrochrysone + CO2. It participates in secondary metabolite biosynthesis. Functionally, decarboxylase; part of the gene cluster that mediates the biosynthesis of the tetrahydroxanthone dimer neosartorin, which exhibits antibacterial activity. The two different monomeric units appear to be synthesized by the same set of enzymes, among which the Baeyer-Villiger monooxygenase nsrF is the key enzyme for the divergence of the biosynthetic routes. The pathway begins with the synthesis of atrochrysone thioester by the polyketide synthase nsrB. The atrochrysone carboxyl ACP thioesterase nsrC then breaks the thioester bond and releases the atrochrysone carboxylic acid from AacuL. Atrochrysone carboxylic acid is decarboxylated by the decarboxylase nsrE, and oxidized by the anthrone oxygenase nsrD to yield emodin. Emodin is then reduced to emodin hydroquinone by the oxidoreductase nsrR. A-ring reduction by the short chain dehydrogenase nsrJ, dehydration by the scytalone dehydratase-like protein nsrI and probable spontaneous re-oxidation, results in overall deoxygenation to chrysophanol. The Baeyer-Villiger monooxygenase nsrF accepts chrysophanol as a substrate to insert one oxygen atom at two different positions to yield the precursors of both monomric units. NsrF is promiscuous/flexible in interacting with the 2 (non methylated and methylated) aromatic rings of chrysophanol, thus diverging the biosynthetic pathway at this point. After the hydrolysis of the lactones, methylesterification by the methyltransferase nsrG yields respectively moniliphenone and 2,2',6'-trihydroxy-4-methyl-6-methoxya-cyldiphenylmethanone. The next steps are the hydroxylation by the FAD-dependent monooxygenase nsrK, followed by isomerization by the monooxygenase nsrQ. The short chain dehydrogenase/reductase nsrO then catalyzes the C-5 ketoreduction to give the xanthone skeleton of blennolide C and 5-acetylblennolide A. The acetyltransferase nsrL has a strict substrate specificity and uses only blennolide A but not blennolide C to yield 5-acetylblennolide A as the single-acetylated product. In the final step of the biosynthesis, the heterodimerization of the 2 xanthones, blennolide C and 5-acetylblennolide A, is catalyzed by the cytochrome P450 monooxygenase nsrP. NsrP can utilize at least three different xanthones as its substrates to perform the dimerization reaction. The sequence is that of Decarboxylase nsrE from Aspergillus novofumigatus (strain IBT 16806).